Reading from the N-terminus, the 261-residue chain is Pimeloyl-[acyl-carrier protein] methyl ester esterase (261 aa).

Positions 16 to 241 (LVLLHGWGLN…HAAHAPFISH (226 aa)) constitute an AB hydrolase-1 domain. Substrate contacts are provided by residues Trp-22, 82 to 83 (SL), and 143 to 147 (FLALQ). The active-site Nucleophile is the Ser-82. Catalysis depends on residues Asp-207 and His-235. Substrate is bound at residue His-235.

Belongs to the AB hydrolase superfamily. Carboxylesterase BioH family. Monomer.

Its subcellular location is the cytoplasm. The enzyme catalyses 6-carboxyhexanoyl-[ACP] methyl ester + H2O = 6-carboxyhexanoyl-[ACP] + methanol + H(+). Its pathway is cofactor biosynthesis; biotin biosynthesis. The physiological role of BioH is to remove the methyl group introduced by BioC when the pimeloyl moiety is complete. It allows to synthesize pimeloyl-ACP via the fatty acid synthetic pathway through the hydrolysis of the ester bonds of pimeloyl-ACP esters. The sequence is that of Pimeloyl-[acyl-carrier protein] methyl ester esterase from Photorhabdus laumondii subsp. laumondii (strain DSM 15139 / CIP 105565 / TT01) (Photorhabdus luminescens subsp. laumondii).